We begin with the raw amino-acid sequence, 83 residues long: Kunitz-type serine protease inhibitor textilinin-1 (83 aa).

The N-terminal stretch at 1 to 24 (MSSGGLLLLLGLLTLWEVLTPVSS) is a signal peptide. Residues 31–81 (CELPADTGPCRVRFPSFYYNPDEKKCLEFIYGGCEGNANNFITKEECESTC) enclose the BPTI/Kunitz inhibitor domain. 3 cysteine pairs are disulfide-bonded: Cys-31-Cys-81, Cys-40-Cys-64, and Cys-56-Cys-77.

The protein belongs to the venom Kunitz-type family. In terms of tissue distribution, expressed by the venom gland.

Its subcellular location is the secreted. Functionally, strongly inhibits plasmin (Ki=0.44 nM) and trypsin (Ki=0.42 nM). Has little effect on plasma (Ki=1870 nM) and tissue (Ki=12900 nM) kallikreins. Its plasmin-inhibiting activity makes it an antifibrinolytic agent. In vivo, reduces blood loss in a mouse tail vein bleeding model. In Pseudonaja textilis textilis (Eastern brown snake), this protein is Kunitz-type serine protease inhibitor textilinin-1.